The primary structure comprises 272 residues: Carbonic anhydrase (272 aa).

Zn(2+) contacts are provided by Cys39, His98, and Cys101.

The protein belongs to the beta-class carbonic anhydrase family. As to quaternary structure, a hexamer formed by a trimer of dimers. Purified from carboxysomes with the both RuBisCO subunits and the full-length form of CcmM, probably interacts with the N-terminus of CcmM. Zn(2+) serves as cofactor.

It is found in the carboxysome. It carries out the reaction hydrogencarbonate + H(+) = CO2 + H2O. Reversible hydration of carbon dioxide. Essential to photosynthetic carbon dioxide fixation, supplies CO(2) to RuBisCO (ribulose bisphosphate carboxylase, rbcL-rbcS) in the carboxysome. Loss of activity results in limitation of CO(2) availability to RuBisCO located in the cytoplasm. In Synechococcus elongatus (strain ATCC 33912 / PCC 7942 / FACHB-805) (Anacystis nidulans R2), this protein is Carbonic anhydrase.